The primary structure comprises 1139 residues: Solute carrier family 12 member 5 (1139 aa).

2 disordered regions span residues 1–62 and 95–116; these read MSRR…KGRE and PQGS…KPVQ. The Cytoplasmic portion of the chain corresponds to 1-98; sequence MSRRFTVTSL…ANYTNLPQGS (98 aa). Basic and acidic residues predominate over residues 21-45; sequence PESRRHSVADPRRLPREDVKGDGNP. A compositionally biased stretch (polar residues) spans 46-55; the sequence is KESSPFINST. Threonine 57 is subject to Phosphothreonine. A compositionally biased stretch (basic and acidic residues) spans 98-111; sequence SKEHEEAENNEGGK. A discontinuously helical transmembrane segment spans residues 99–120; the sequence is KEHEEAENNEGGKKKPVQAPRM. K(+) is bound at residue lysine 113. Residues 121-129 are Extracellular-facing; it reads GTFMGVYLP. The helical transmembrane segment at 130–151 threads the bilayer; it reads CLQNIFGVILFLRLTWVVGIAG. Residues 152 to 174 are Cytoplasmic-facing; it reads IMESFCMVFICCSCTMLTAISMS. The helical transmembrane segment at 175-203 threads the bilayer; sequence AIATNGVVPAGGSYYMISRSLGPEFGGAV. Alanine 184 lines the chloride pocket. Over 204 to 229 the chain is Extracellular; the sequence is GLCFYLGTTFAGAMYILGTIEILLAY. The next 2 membrane-spanning stretches (helical) occupy residues 230–250 and 251–276; these read LFPA…AAML and NNMR…KYVN. Topologically, residues 277 to 402 are extracellular; the sequence is KFALVFLGCV…ERRGMPSVGL (126 aa). A disulfide bridge links cysteine 310 with cysteine 325. Asparagine 314, asparagine 333, asparagine 351, and asparagine 362 each carry an N-linked (GlcNAc...) asparagine glycan. Cysteine 345 and cysteine 354 are joined by a disulfide. Residues 403 to 420 form a helical membrane-spanning segment; that stretch reads ADGTPVDMDHPYVFSDMT. Methionine 410 is a K(+) binding site. Chloride contacts are provided by tyrosine 414 and valine 415. Residues 421–429 lie on the Cytoplasmic side of the membrane; that stretch reads SYFTLLVGI. Residues 430–453 form a helical membrane-spanning segment; sequence YFPSVTGIMAGSNRSGDLRDAQKS. Aspartate 446 lines the K(+) pocket. Topologically, residues 454–485 are extracellular; it reads IPTGTILAIATTSAVYISSVVLFGACIEGVVL. Residues 486–513 form a helical membrane-spanning segment; that stretch reads RDKFGEAVNGNLVVGTLAWPSPWVIVIG. The Cytoplasmic portion of the chain corresponds to 514 to 534; it reads SFFSTCGAGLQSLTGAPRLLQ. The next 2 membrane-spanning stretches (helical) occupy residues 535–555 and 556–578; these read AISR…KANG and EPTW…ASLD. Chloride is bound at residue glutamate 569. The Cytoplasmic portion of the chain corresponds to 579-592; the sequence is EVAPILSMFFLMCY. Transmembrane regions (helical) follow at residues 593-615 and 616-632; these read MFVN…PRFR and YYHW…CLAL. Residues 633–1139 are Cytoplasmic-facing; sequence MFICSWYYAL…GGREVITIYS (507 aa). Residues 667–681 are scissor helix; it reads GIRGLSLSAARYALL. A Phosphothreonine; by OXSR1 and STK39 modification is found at threonine 929. The tract at residues 943–1025 is disordered; that stretch reads HLTKNERERE…PEGEGETDPE (83 aa). Basic and acidic residues predominate over residues 945–962; sequence TKNEREREIQSITDESRG. Positions 982 to 994 are enriched in acidic residues; the sequence is TACDNEEKPEEEV. Positions 1003–1012 are enriched in low complexity; it reads PSCPSSSPSP. Threonine 1030 carries the post-translational modification Phosphothreonine; by OXSR1 and STK39. Positions 1033-1052 are disordered; sequence KDKSAAQKNKGPSPVSSEGI. 3 positions are modified to phosphoserine: serine 1045, serine 1048, and serine 1049.

Belongs to the SLC12A transporter family. K/Cl co-transporter subfamily. In terms of assembly, homodimer; adopts a domain-swap conformation at the scissor helices connecting the transmembrane domain and C-terminal domain. Heterodimer wHeterodimer with K-Cl cotransporters SLC12A6 and SLC12A7. Interacts with AP2A1. Post-translationally, phosphorylated at Thr-929 and Thr-1030 by OXSR1/OSR1 and STK39/SPAK downstream of WNK kinases (WNK1, WNK2, WNK3 or WNK4), inhibiting the potassium-chloride cotransport activity. In terms of tissue distribution, highly expressed in brain. Not detected in other tissues. Highly expressed in pyramidal neurons and in neurons throughout the cortex, hippocampus, the granular layer of the cerebellum and in groups of neurons throughout the brainstem. Barely detectable in dorsal-root ganglions.

Its subcellular location is the cell membrane. The protein resides in the cell projection. It is found in the dendrite. It carries out the reaction K(+)(in) + chloride(in) = K(+)(out) + chloride(out). With respect to regulation, inhibited following phosphorylation by OXSR1/OSR1 and STK39/SPAK: phosphorylation takes place downstream of WNK kinases (WNK1, WNK2, WNK3 or WNK4) in response to hyperosmotic stress and subsequent cell shrinkage. Its function is as follows. Mediates electroneutral potassium-chloride cotransport in mature neurons and is required for neuronal Cl(-) homeostasis. As major extruder of intracellular chloride, it establishes the low neuronal Cl(-) levels required for chloride influx after binding of GABA-A and glycine to their receptors, with subsequent hyperpolarization and neuronal inhibition. Involved in the regulation of dendritic spine formation and maturation. This chain is Solute carrier family 12 member 5 (Slc12a5), found in Rattus norvegicus (Rat).